A 706-amino-acid polypeptide reads, in one-letter code: ATP-dependent DNA helicase HMI1, mitochondrial (706 aa).

The region spanning 5–277 (TPSQWKVINK…LKLFDNFRST (273 aa)) is the UvrD-like helicase ATP-binding domain. ATP-binding positions include 29–34 (GSGKTL) and Arg275. The UvrD-like helicase C-terminal domain occupies 278 to 593 (PEIISLASKI…KLSTIHSAKG (316 aa)). A propeptide spans 693–706 (YSSLRGCKSVFRRI) (cleaved upon import into mitochondrion).

The protein belongs to the helicase family. UvrD subfamily. Requires Mg(2+) as cofactor.

The protein resides in the mitochondrion inner membrane. It carries out the reaction Couples ATP hydrolysis with the unwinding of duplex DNA by translocating in the 3'-5' direction.. The enzyme catalyses ATP + H2O = ADP + phosphate + H(+). Required for mitochondrial genome maintenance and mitochondrial DNA inheritance. This chain is ATP-dependent DNA helicase HMI1, mitochondrial (HMI1), found in Saccharomyces cerevisiae (strain ATCC 204508 / S288c) (Baker's yeast).